The sequence spans 234 residues: Ubiquinone biosynthesis O-methyltransferase (234 aa).

S-adenosyl-L-methionine is bound by residues Arg40, Gly59, Asp80, and Met123.

It belongs to the methyltransferase superfamily. UbiG/COQ3 family.

It carries out the reaction a 3-demethylubiquinol + S-adenosyl-L-methionine = a ubiquinol + S-adenosyl-L-homocysteine + H(+). The enzyme catalyses a 3-(all-trans-polyprenyl)benzene-1,2-diol + S-adenosyl-L-methionine = a 2-methoxy-6-(all-trans-polyprenyl)phenol + S-adenosyl-L-homocysteine + H(+). It functions in the pathway cofactor biosynthesis; ubiquinone biosynthesis. Its function is as follows. O-methyltransferase that catalyzes the 2 O-methylation steps in the ubiquinone biosynthetic pathway. The sequence is that of Ubiquinone biosynthesis O-methyltransferase from Coxiella burnetii (strain Dugway 5J108-111).